Here is a 427-residue protein sequence, read N- to C-terminus: MLDPKLLRNALADTTRQLARRGFEWDAAAFATLEAERKEMQVCTQELQAKRNARSKIIGKAKAQGEDIAPLLAEMTELGDHLKTVEARLEVVQAQIEEILLGIPNLPDASTPPGKDEQDNVEVRRWGTPPALEFVPKDHVDLGASLGMDFETAVKLSGTRFVTLIGPLAQLHRALIQFMLDVHTREHGYTEVYVPYLANRESLVGTGQLPKFEEGLFAIRDTGYYLIPTAEVPVTNLVRGEILLAERLPLKYVAHTPCFRSEAGSYGKDTRGMIRQHQFEKVELVQIVPPEVSQQAHEDLTGHAEAILQRLGLPYRVMNLCAGDLGFASSKTYDLEVWLPGQQTYREISSCSNFLDFQARRIQARWRDPKTQKPAWVHTLNGSGLAVGRTLLALMENYQQADGSIRIPETLQPYMGGVSVLQPSIRG.

229–231 serves as a coordination point for L-serine; it reads TAE. Residue 260-262 participates in ATP binding; it reads RSE. An L-serine-binding site is contributed by Glu283. 347–350 contributes to the ATP binding site; it reads EISS. Ser383 is an L-serine binding site.

It belongs to the class-II aminoacyl-tRNA synthetase family. Type-1 seryl-tRNA synthetase subfamily. Homodimer. The tRNA molecule binds across the dimer.

The protein resides in the cytoplasm. The enzyme catalyses tRNA(Ser) + L-serine + ATP = L-seryl-tRNA(Ser) + AMP + diphosphate + H(+). The catalysed reaction is tRNA(Sec) + L-serine + ATP = L-seryl-tRNA(Sec) + AMP + diphosphate + H(+). The protein operates within aminoacyl-tRNA biosynthesis; selenocysteinyl-tRNA(Sec) biosynthesis; L-seryl-tRNA(Sec) from L-serine and tRNA(Sec): step 1/1. Functionally, catalyzes the attachment of serine to tRNA(Ser). Is also able to aminoacylate tRNA(Sec) with serine, to form the misacylated tRNA L-seryl-tRNA(Sec), which will be further converted into selenocysteinyl-tRNA(Sec). The protein is Serine--tRNA ligase of Nitrosococcus oceani (strain ATCC 19707 / BCRC 17464 / JCM 30415 / NCIMB 11848 / C-107).